The following is a 384-amino-acid chain: Dual-specificity RNA methyltransferase RlmN (384 aa).

Glu-93 (proton acceptor) is an active-site residue. Residues 99-339 form the Radical SAM core domain; it reads EETRGTLCVS…TTIRKTRGDD (241 aa). Cysteines 106 and 344 form a disulfide. Positions 113, 117, and 120 each coordinate [4Fe-4S] cluster. S-adenosyl-L-methionine contacts are provided by residues 170-171, Ser-202, 224-226, and Asn-301; these read GE and SLH. Catalysis depends on Cys-344, which acts as the S-methylcysteine intermediate.

Belongs to the radical SAM superfamily. RlmN family. The cofactor is [4Fe-4S] cluster.

It is found in the cytoplasm. It carries out the reaction adenosine(2503) in 23S rRNA + 2 reduced [2Fe-2S]-[ferredoxin] + 2 S-adenosyl-L-methionine = 2-methyladenosine(2503) in 23S rRNA + 5'-deoxyadenosine + L-methionine + 2 oxidized [2Fe-2S]-[ferredoxin] + S-adenosyl-L-homocysteine. The catalysed reaction is adenosine(37) in tRNA + 2 reduced [2Fe-2S]-[ferredoxin] + 2 S-adenosyl-L-methionine = 2-methyladenosine(37) in tRNA + 5'-deoxyadenosine + L-methionine + 2 oxidized [2Fe-2S]-[ferredoxin] + S-adenosyl-L-homocysteine. Functionally, specifically methylates position 2 of adenine 2503 in 23S rRNA and position 2 of adenine 37 in tRNAs. m2A2503 modification seems to play a crucial role in the proofreading step occurring at the peptidyl transferase center and thus would serve to optimize ribosomal fidelity. The sequence is that of Dual-specificity RNA methyltransferase RlmN from Cupriavidus necator (strain ATCC 17699 / DSM 428 / KCTC 22496 / NCIMB 10442 / H16 / Stanier 337) (Ralstonia eutropha).